The following is a 39-amino-acid chain: uncharacterized protein (39 aa).

This sequence belongs to the orthopoxvirus A30.5 protein family.

This is an uncharacterized protein from Bos taurus (Bovine).